A 309-amino-acid polypeptide reads, in one-letter code: Homoserine kinase (309 aa).

91–101 lines the ATP pocket; it reads PIGSGLGSSAC.

It belongs to the GHMP kinase family. Homoserine kinase subfamily.

It localises to the cytoplasm. The enzyme catalyses L-homoserine + ATP = O-phospho-L-homoserine + ADP + H(+). It functions in the pathway amino-acid biosynthesis; L-threonine biosynthesis; L-threonine from L-aspartate: step 4/5. Its function is as follows. Catalyzes the ATP-dependent phosphorylation of L-homoserine to L-homoserine phosphate. The protein is Homoserine kinase of Buchnera aphidicola subsp. Schizaphis graminum (strain Sg).